A 130-amino-acid chain; its full sequence is Small ribosomal subunit protein uS8 (130 aa).

It belongs to the universal ribosomal protein uS8 family.

The polypeptide is Small ribosomal subunit protein uS8 (RPS15A) (Paracentrotus lividus (Common sea urchin)).